The sequence spans 416 residues: Tyrosine--tRNA ligase (416 aa).

Tyr39 is a binding site for L-tyrosine. The 'HIGH' region signature appears at 44–53 (CTAPSLHAGH). Tyr176 and Gln180 together coordinate L-tyrosine. A 'KMSKS' region motif is present at residues 236–240 (KMGKT). Lys239 contacts ATP. Residues 349–414 (ISLVDLLHDT…AGKKRHIKVV (66 aa)) form the S4 RNA-binding domain.

The protein belongs to the class-I aminoacyl-tRNA synthetase family. TyrS type 1 subfamily. Homodimer.

The protein resides in the cytoplasm. The catalysed reaction is tRNA(Tyr) + L-tyrosine + ATP = L-tyrosyl-tRNA(Tyr) + AMP + diphosphate + H(+). Its function is as follows. Catalyzes the attachment of tyrosine to tRNA(Tyr) in a two-step reaction: tyrosine is first activated by ATP to form Tyr-AMP and then transferred to the acceptor end of tRNA(Tyr). In Wolbachia pipientis wMel, this protein is Tyrosine--tRNA ligase.